The chain runs to 812 residues: Eukaryotic translation initiation factor 3 subunit C (812 aa).

Residues 1-110 (MSRFFSSNYE…EESDEEDGKK (110 aa)) form a disordered region. Acidic residues-rich tracts occupy residues 18-30 (SEED…EEDL) and 38-64 (SELD…DSDD). Ser-98, Ser-99, and Ser-103 each carry phosphoserine. The PCI domain maps to 608–783 (YHQHINLDLI…TIFVVEKGDE (176 aa)).

The protein belongs to the eIF-3 subunit C family. As to quaternary structure, the eukaryotic translation initiation factor 3 (eIF-3) core complex is composed of TIF32, PRT1, NIP1, TIF34 and TIF35. A subcomplex of TIF32, NIP1 and PRT1 mediates the interaction with eIF-1, TIF5/eIF-5 and HCR1. The factors eIF-1, eIF-2, eIF-3, TIF5/eIF-5 and methionyl-tRNAi form a multifactor complex (MFC) that may bind to the 40S ribosome. TIF32, NIP1 and TIF5/eIF-5 comprise a minimal 40S-ribosome-binding unit. NIP1 interacts with TIF5/eIF-5 and SUI1.

Its subcellular location is the cytoplasm. In terms of biological role, component of the eukaryotic translation initiation factor 3 (eIF-3) complex, which is involved in protein synthesis of a specialized repertoire of mRNAs and, together with other initiation factors, stimulates binding of mRNA and methionyl-tRNAi to the 40S ribosome. The eIF-3 complex specifically targets and initiates translation of a subset of mRNAs involved in cell proliferation. The polypeptide is Eukaryotic translation initiation factor 3 subunit C (Saccharomyces cerevisiae (strain ATCC 204508 / S288c) (Baker's yeast)).